The primary structure comprises 193 residues: Penicillin-binding protein activator LpoB (193 aa).

Positions 1-16 are cleaved as a signal peptide; it reads MKKMLFVVAAVFLLAG. Cys-17 carries the N-palmitoyl cysteine lipid modification. Cys-17 carries S-diacylglycerol cysteine lipidation. Residues 23–50 form a disordered region; the sequence is QQPPAPVEPVTPTEPTEPPKPIEPPIEV. The segment covering 37–46 has biased composition (pro residues); that stretch reads PTEPPKPIEP.

It belongs to the LpoB family. In terms of assembly, interacts with PBP1b.

It is found in the cell outer membrane. Regulator of peptidoglycan synthesis that is essential for the function of penicillin-binding protein 1B (PBP1b). This Proteus mirabilis (strain HI4320) protein is Penicillin-binding protein activator LpoB.